The sequence spans 418 residues: uncharacterized protein (418 aa).

Residues 1–24 (MSGTAGFITVSPGPPTEAPGGFPR) form a disordered region.

To A.pernix APE_1276 and S.solfataricus SSO2105.

This is an uncharacterized protein from Aeropyrum pernix (strain ATCC 700893 / DSM 11879 / JCM 9820 / NBRC 100138 / K1).